Consider the following 284-residue polypeptide: Ribosome-associated protein oga1 (284 aa).

Positions 1-284 are disordered; that stretch reads MSVASKNLFD…LSETDFPALA (284 aa). A compositionally biased stretch (basic and acidic residues) spans 22–36; it reads TEKKTAASRDKKRSD. A phosphoserine mark is found at Ser37 and Ser51. 2 stretches are compositionally biased toward basic and acidic residues: residues 52–73 and 119–141; these read RKRD…ADQP and GREF…ERGW. Thr160 carries the phosphothreonine modification. Ser162 carries the post-translational modification Phosphoserine. Thr166 carries the phosphothreonine modification. Composition is skewed to basic and acidic residues over residues 172–186 and 194–209; these read ENVK…ERKS and TVEK…KSAP. Low complexity predominate over residues 214-224; sequence ASLKKSASQKK. Residues 226-237 are compositionally biased toward basic and acidic residues; sequence AAKESKPKKVLL. Residues 245–254 show a composition bias toward low complexity; that stretch reads ARPARGGRPN. Positions 263-277 are enriched in polar residues; that stretch reads ETASKTQQAPPTLSE.

Belongs to the STM1 family. Associates with mature 80S ribosomes. Binds to the head domain of the 40S ribosomal subunit and prevents mRNA binding by inserting its alpha-helix domain towards the mRNA entry tunnel at the decoding site, where it blocks the binding of tRNA and mRNA at the A- and P-sites. Interacts with eEF2; interaction sequesters eEF2 at the A-site of the ribosome, thereby blocking the interaction sites of the mRNA-tRNA complex, promoting ribosome stabilization and hibernation. Interacts with sad1. In terms of processing, phosphorylation by TORC1 upon nutrient replenishment inhibits STM1 and causes its release from dormant ribosomes.

It is found in the cytoplasm. In terms of biological role, ribosome preservation factor that protect a small pool of nontranslating, vacant ribosomes in cells under nutrient starvation conditions. Under nutrient-limiting conditions, cells reduce ribosome biogenesis and degrade ribosomes via autophagy (ribophagy) or proteasomal degradation. To avoid excessive degradation during starvation, STM1 binds to and protects 80S ribosomes from proteasomal degradation. Under nutrient-sufficient conditions, TORC1 phosphorylates and inhibits STM1 to prevent formation of dormant 80S ribosomes. Acts as an inhibitor of mRNA translation by promoting ribosome hibernation: clamps the two ribosomal subunits, thereby preventing their dissociation, and inhibits translation by excluding mRNA-binding. Acts via its association with eEF2, promoting ribosome stabilization and storage in an inactive state. May also repress translation by preventing association of eEF3 with ribosomes. Binds specifically G4 quadruplex (these are four-stranded right-handed helices, stabilized by guanine base quartets) and purine motif triplex (characterized by a third, antiparallel purine-rich DNA strand located within the major groove of a homopurine stretch of duplex DNA) nucleic acid structures. These structures may be present at telomeres or in rRNAs. Extends chronological lifespan when overexpressed. The chain is Ribosome-associated protein oga1 from Schizosaccharomyces pombe (strain 972 / ATCC 24843) (Fission yeast).